The primary structure comprises 46 residues: MEAEVSATVSVAYSTIVVKAEKADARALNSLSILFAAPIKPSTRAG.

This is an uncharacterized protein from Saccharomyces cerevisiae (strain ATCC 204508 / S288c) (Baker's yeast).